Reading from the N-terminus, the 302-residue chain is Small ribosomal subunit protein uS2 (302 aa).

The segment at E275–E302 is disordered. Positions A287 to E302 are enriched in basic residues.

This sequence belongs to the universal ribosomal protein uS2 family.

The polypeptide is Small ribosomal subunit protein uS2 (Opitutus terrae (strain DSM 11246 / JCM 15787 / PB90-1)).